The sequence spans 664 residues: Cyclic nucleotide-gated channel alpha-2 (664 aa).

The span at 1 to 11 (MTEKTNGVKSS) shows a compositional bias: polar residues. Residues 1–49 (MTEKTNGVKSSPANNHNHHAPPAIKANGKDDHRTSSRPHSAADDDTSSE) are disordered. Residues 1 to 144 (MTEKTNGVKS…PAGDWYYCWL (144 aa)) are Cytoplasmic-facing. Over residues 12 to 23 (PANNHNHHAPPA) the composition is skewed to low complexity. A helical transmembrane segment spans residues 145 to 166 (FVIAMPVLYNWCLLVARACFSD). At 167–176 (LQKGYYLVWL) the chain is on the extracellular side. A helical membrane pass occupies residues 177–197 (VLDYVSDVVYIADLFIRLRTG). The Cytoplasmic segment spans residues 198-222 (FLEQGLLVKDTKKLRDNYIHTLQFK). The chain crosses the membrane as a helical span at residues 223-241 (LDVASIIPTDLIYFAVDIH). The Extracellular segment spans residues 242 to 246 (SPEVR). Residues 247 to 265 (FNRLLHFARMFEFFDRTET) traverse the membrane as a helical segment. The Cytoplasmic segment spans residues 266-272 (RTNYPNI). An ion conduction pathway region spans residues 270–378 (PNIFRISNLV…GNVGSMISNM (109 aa)). The helical transmembrane segment at 273–296 (FRISNLVLYILVIIHWNACIYYAI) threads the bilayer. Over 297–319 (SKSIGFGVDTWVYPNITDPEYGY) the chain is Extracellular. The next 2 membrane-spanning stretches (helical) occupy residues 320–354 (LARE…LFVI) and 355–379 (FDFL…SNMN). The selectivity filter stretch occupies residues 337–340 (TIGE). The interval 380–456 (ATRAEFQAKI…STLKKVRIFH (77 aa)) is C-linker. Residues 380-664 (ATRAEFQAKI…SPELAAADEP (285 aa)) are Cytoplasmic-facing. The cyclic nucleotide-binding domain stretch occupies residues 460 to 580 (AGLLVELVLK…EERGREILMK (121 aa)). 3',5'-cyclic GMP-binding residues include Gly-520, Ser-523, Arg-536, and Thr-537. Positions 536 and 537 each coordinate 3',5'-cyclic AMP. Residues 597 to 651 (VQEKLGQLETNMETLYTRFGRLLAEYTGAQQKLKQRITVLETKMKQNNEDDYLSD) adopt a coiled-coil conformation. The interval 641 to 664 (KQNNEDDYLSDGMNSPELAAADEP) is disordered.

It belongs to the cyclic nucleotide-gated cation channel (TC 1.A.1.5) family. CNGA2 subfamily. In terms of assembly, the olfactory cyclic nucleotide-gated channel is an heterotetramer composed of CNGA2, CNGA4 and CNGB1b subunits with 2:1:1 stoichiometry.

It is found in the cell projection. The protein resides in the cilium membrane. The catalysed reaction is Ca(2+)(in) = Ca(2+)(out). It catalyses the reaction Na(+)(in) = Na(+)(out). It carries out the reaction K(+)(in) = K(+)(out). The enzyme catalyses NH4(+)(in) = NH4(+)(out). The catalysed reaction is Rb(+)(in) = Rb(+)(out). It catalyses the reaction Li(+)(in) = Li(+)(out). It carries out the reaction Cs(+)(in) = Cs(+)(out). Pore-forming subunit of the olfactory cyclic nucleotide-gated channel. Operates in the cilia of olfactory sensory neurons where chemical stimulation of the odorant is converted to an electrical signal. Mediates odorant-induced cAMP-dependent Ca(2+) influx triggering neuron depolarization. The rise of intracellular Ca(2+) levels potentiates the olfactory response by activating Ca(2+)-dependent Cl(-) channels, but it also serves as a negative feedback signal to desensitize the channel for rapid adaptation to odorants. Conducts cAMP- and cGMP-gated ion currents, with permeability for monovalent and divalent cations. The sequence is that of Cyclic nucleotide-gated channel alpha-2 from Homo sapiens (Human).